The chain runs to 945 residues: Isoleucine--tRNA ligase (945 aa).

The 'HIGH' region motif lies at 66–76 (PYANGDIHLGH). Glu581 contributes to the L-isoleucyl-5'-AMP binding site. The short motif at 622–626 (KMSKS) is the 'KMSKS' region element. Position 625 (Lys625) interacts with ATP. Zn(2+)-binding residues include Cys908, Cys911, Cys928, and Cys931.

The protein belongs to the class-I aminoacyl-tRNA synthetase family. IleS type 1 subfamily. In terms of assembly, monomer. The cofactor is Zn(2+).

The protein resides in the cytoplasm. It carries out the reaction tRNA(Ile) + L-isoleucine + ATP = L-isoleucyl-tRNA(Ile) + AMP + diphosphate. Its function is as follows. Catalyzes the attachment of isoleucine to tRNA(Ile). As IleRS can inadvertently accommodate and process structurally similar amino acids such as valine, to avoid such errors it has two additional distinct tRNA(Ile)-dependent editing activities. One activity is designated as 'pretransfer' editing and involves the hydrolysis of activated Val-AMP. The other activity is designated 'posttransfer' editing and involves deacylation of mischarged Val-tRNA(Ile). In Paraburkholderia xenovorans (strain LB400), this protein is Isoleucine--tRNA ligase.